A 197-amino-acid polypeptide reads, in one-letter code: ATP-dependent Clp protease proteolytic subunit 1 (197 aa).

Residue S96 is the Nucleophile of the active site. The active site involves H121.

Belongs to the peptidase S14 family. In terms of assembly, fourteen ClpP subunits assemble into 2 heptameric rings which stack back to back to give a disk-like structure with a central cavity, resembling the structure of eukaryotic proteasomes.

It is found in the cytoplasm. The enzyme catalyses Hydrolysis of proteins to small peptides in the presence of ATP and magnesium. alpha-casein is the usual test substrate. In the absence of ATP, only oligopeptides shorter than five residues are hydrolyzed (such as succinyl-Leu-Tyr-|-NHMec, and Leu-Tyr-Leu-|-Tyr-Trp, in which cleavage of the -Tyr-|-Leu- and -Tyr-|-Trp bonds also occurs).. Functionally, cleaves peptides in various proteins in a process that requires ATP hydrolysis. Has a chymotrypsin-like activity. Plays a major role in the degradation of misfolded proteins. In Synechococcus sp. (strain ATCC 27144 / PCC 6301 / SAUG 1402/1) (Anacystis nidulans), this protein is ATP-dependent Clp protease proteolytic subunit 1.